The sequence spans 345 residues: NADH-quinone oxidoreductase subunit H (345 aa).

The next 8 helical transmembrane spans lie at 15–35, 82–102, 115–135, 161–181, 190–210, 240–262, 278–298, and 309–329; these read MLLQ…FMVY, FVYF…FVVI, VGIL…IMGG, LGLI…TAIV, LLNW…VSAL, YLLF…SLLF, WWMV…KAIV, and IGWK…AILA.

Belongs to the complex I subunit 1 family. In terms of assembly, NDH-1 is composed of at least 14 different subunits, Nqo1 to Nqo14. The complex has a L-shaped structure, with the hydrophobic arm (subunits Nqo7, Nqo8, Nqo10 to Nqo14) embedded in the inner membrane and the hydrophilic peripheral arm (subunits Nqo1 to Nqo6, Nqo9) protruding into the bacterial cytoplasm. The hydrophilic domain contains all the redox centers. NADH-quinone oxidoreductase forms a supercomplex with ubiquinol-cytochrome c reductase complex (complex III or cytochrome b-c1 complex) and cytochrome c oxidase (complex IV), which stabilizes the NADH-quinone oxidoreductase complex.

Its subcellular location is the cell inner membrane. The catalysed reaction is a quinone + NADH + 5 H(+)(in) = a quinol + NAD(+) + 4 H(+)(out). In terms of biological role, NDH-1 shuttles electrons from NADH, via FMN and iron-sulfur (Fe-S) centers, to quinones in the respiratory chain. The immediate electron acceptor for the enzyme in this species is believed to be ubiquinone. Couples the redox reaction to proton translocation (for every two electrons transferred, four hydrogen ions are translocated across the cytoplasmic membrane), and thus conserves the redox energy in a proton gradient. This subunit may bind ubiquinone. The polypeptide is NADH-quinone oxidoreductase subunit H (Paracoccus denitrificans (strain Pd 1222)).